The following is a 326-amino-acid chain: Ribonuclease H2 subunit A (326 aa).

The interval 1–47 (MKDDHDAWEPEELVSDNNSSENELQEDQNSSITFLPPSVNKSNPAKS) is disordered. The segment covering 15–47 (SDNNSSENELQEDQNSSITFLPPSVNKSNPAKS) has biased composition (polar residues). The region spanning 63–286 (PYRLGVDEAG…AKDLLELPSK (224 aa)) is the RNase H type-2 domain. 3 residues coordinate a divalent metal cation: D69, E70, and D180.

The protein belongs to the RNase HII family. Eukaryotic subfamily. The cofactor is Mn(2+). Mg(2+) is required as a cofactor.

The catalysed reaction is Endonucleolytic cleavage to 5'-phosphomonoester.. In terms of biological role, endonuclease that specifically degrades the RNA of RNA-DNA hybrids. Participates in DNA replication. The chain is Ribonuclease H2 subunit A (rnh201) from Schizosaccharomyces pombe (strain 972 / ATCC 24843) (Fission yeast).